Consider the following 204-residue polypeptide: N-(5'-phosphoribosyl)anthranilate isomerase (204 aa).

This sequence belongs to the TrpF family.

The catalysed reaction is N-(5-phospho-beta-D-ribosyl)anthranilate = 1-(2-carboxyphenylamino)-1-deoxy-D-ribulose 5-phosphate. Its pathway is amino-acid biosynthesis; L-tryptophan biosynthesis; L-tryptophan from chorismate: step 3/5. This is N-(5'-phosphoribosyl)anthranilate isomerase from Oceanobacillus iheyensis (strain DSM 14371 / CIP 107618 / JCM 11309 / KCTC 3954 / HTE831).